The sequence spans 162 residues: Phospholipase A2 (162 aa).

Positions 1–22 are cleaved as a signal peptide; the sequence is MKVLQMFFCVILLCVTSVLVEA. A propeptide spanning residues 23 to 35 is cleaved from the precursor; it reads KSTTKGDETASKR. Cystine bridges form between cysteine 60–cysteine 155, cysteine 62–cysteine 78, cysteine 77–cysteine 134, cysteine 84–cysteine 127, cysteine 94–cysteine 120, and cysteine 113–cysteine 125. The Ca(2+) site is built by tyrosine 61, glycine 63, and glycine 65. Histidine 81 is a catalytic residue. Aspartate 82 serves as a coordination point for Ca(2+). Residue aspartate 128 is part of the active site.

The protein belongs to the phospholipase A2 family. Group I subfamily. D49 sub-subfamily. Ca(2+) is required as a cofactor. In terms of tissue distribution, expressed both outside and in acontia, a specialised envenomation structure laden with batteries of venom-containing nematocysts found only in the superfamily Metridioidea.

The protein resides in the secreted. The protein localises to the nematocyst. It catalyses the reaction a 1,2-diacyl-sn-glycero-3-phosphocholine + H2O = a 1-acyl-sn-glycero-3-phosphocholine + a fatty acid + H(+). PLA2 catalyzes the calcium-dependent hydrolysis of the 2-acyl groups in 3-sn-phosphoglycerides. In Calliactis polypus (Hermit crab anemone), this protein is Phospholipase A2.